A 724-amino-acid chain; its full sequence is Threonine--tRNA ligase 2, cytoplasmic (724 aa).

Alanine 2 is subject to N-acetylalanine. Residues 44 to 72 (QAEGPCLTREVAQLRAENRELRHCLYRLR) adopt a coiled-coil conformation. A disordered region spans residues 90 to 112 (RAEAGRAAAGAQPPPSQSLEEDV). Residues 155 to 220 (DSSNVITVRV…EGDATVELLT (66 aa)) enclose the TGS domain. Serine 451 is modified (phosphoserine).

Belongs to the class-II aminoacyl-tRNA synthetase family. May be a component of the multisynthetase complex (MSC), a large multi-subunit complex which contains at least eight different aminoacyl-tRNA synthetases plus three auxillary subunits AIMP1, AIMP2 and EEF1E1. Interacts with the MSC components EPRS1, AIMP1, AIMP2 and KARS1.

The protein localises to the cytoplasm. The protein resides in the nucleus. The enzyme catalyses tRNA(Thr) + L-threonine + ATP = L-threonyl-tRNA(Thr) + AMP + diphosphate + H(+). Functionally, catalyzes the attachment of threonine to tRNA(Thr) in a two-step reaction: threonine is first activated by ATP to form Thr-AMP and then transferred to the acceptor end of tRNA(Thr). Also edits incorrectly charged tRNA(Thr) via its editing domain, at the post-transfer stage. In Bos taurus (Bovine), this protein is Threonine--tRNA ligase 2, cytoplasmic (TARS3).